A 126-amino-acid polypeptide reads, in one-letter code: Protein HEAT-INDUCED TAS1 TARGET 3 (126 aa).

Belongs to the heat induced plant HTT protein family. In terms of tissue distribution, expressed in seedlings, leaves, stems, inflorescences and siliques.

It is found in the cytoplasm. It localises to the nucleus. Its function is as follows. Mediates both basal and acquired thermotolerance. This is Protein HEAT-INDUCED TAS1 TARGET 3 from Arabidopsis thaliana (Mouse-ear cress).